Consider the following 552-residue polypeptide: Elongator complex protein 3 (552 aa).

The region spanning 84 to 374 (RTASGIAVVA…YRVQRDIPMP (291 aa)) is the Radical SAM core domain. [4Fe-4S] cluster-binding residues include cysteine 101, cysteine 111, and cysteine 114. Residues lysine 166, 476–479 (ELHV), 499–501 (FGM), and tyrosine 532 each bind acetyl-CoA. In terms of domain architecture, N-acetyltransferase spans 398 to 552 (TTCRDVRTRE…YMSKSIEENN (155 aa)).

It belongs to the ELP3 family. Component of the elongator complex composed of Elp1, Elp2, Elp3, Elp4, Elp5 and Elp6. The elongator complex associates with and stabilizes microtubules; efficient interaction requires the full complex. The cofactor is [4Fe-4S] cluster.

The protein resides in the cytoplasm. It localises to the nucleus. The protein localises to the cytoskeleton. Its subcellular location is the spindle. The catalysed reaction is uridine(34) in tRNA + acetyl-CoA + S-adenosyl-L-methionine + H2O = 5-(carboxymethyl)uridine(34) in tRNA + 5'-deoxyadenosine + L-methionine + CoA + 2 H(+). It functions in the pathway tRNA modification; 5-methoxycarbonylmethyl-2-thiouridine-tRNA biosynthesis. Catalytic tRNA acetyltransferase subunit of the elongator complex, which is required for multiple tRNA modifications, including mcm5U (5-methoxycarbonylmethyl uridine), mcm5s2U (5-methoxycarbonylmethyl-2-thiouridine), and ncm5U (5-carbamoylmethyl uridine). In the elongator complex, acts as a tRNA uridine(34) acetyltransferase by mediating formation of carboxymethyluridine in the wobble base at position 34 in tRNAs. Binding by the elongator complex stabilizes microtubules and promotes their growth. This induces central spindle asymmetry, promoting polarized signaling endosome trafficking during asymmetric cell division and cell fate assignation of sensory organ precursor cells. Plays a role in the control of synaptic bouton expansion. Required for larval development. Involved in protein synthesis-dependent long-term memory formation, probably as part of the elongator complex. In Drosophila melanogaster (Fruit fly), this protein is Elongator complex protein 3.